The following is a 168-amino-acid chain: Nuclear cap-binding protein subunit 2 (168 aa).

Residues Tyr-23, Tyr-46, 115–119, 126–130, and 136–137 each bind mRNA; these read RTDWD, RQYGR, and QV. Positions 43–121 constitute an RRM domain; that stretch reads STLYVGNLSF…RIVRTDWDAG (79 aa).

The protein belongs to the RRM NCBP2 family. As to quaternary structure, component of the nuclear cap-binding complex (CBC), a heterodimer composed of NCBP1/CBP80 and NCBP2/CBP20 that interacts with m7GpppG-capped RNA.

The protein localises to the nucleus. The protein resides in the cytoplasm. Its function is as follows. Component of the cap-binding complex (CBC), which binds co-transcriptionally to the 5' cap of pre-mRNAs and is involved in various processes such as pre-mRNA splicing, translation regulation, nonsense-mediated mRNA decay, RNA-mediated gene silencing (RNAi) by microRNAs (miRNAs) and mRNA export. The CBC complex is involved in mRNA export from the nucleus, leading to the recruitment of the mRNA export machinery to the 5' end of mRNA and to mRNA export in a 5' to 3' direction through the nuclear pore. The CBC complex is also involved in mediating U snRNA and intronless mRNAs export from the nucleus. The CBC complex is essential for a pioneer round of mRNA translation, before steady state translation when the CBC complex is replaced by cytoplasmic cap-binding protein eIF4E. The pioneer round of mRNA translation mediated by the CBC complex plays a central role in nonsense-mediated mRNA decay (NMD), NMD only taking place in mRNAs bound to the CBC complex, but not on eIF4E-bound mRNAs. The CBC complex enhances NMD in mRNAs containing at least one exon-junction complex (EJC), promoting the interaction between UPF1 and UPF2. The CBC complex is also involved in 'failsafe' NMD, which is independent of the EJC complex, while it does not participate in Staufen-mediated mRNA decay (SMD). During cell proliferation, the CBC complex is also involved in microRNAs (miRNAs) biogenesis via its interaction with SRRT/ARS2, thereby being required for miRNA-mediated RNA interference. The CBC complex also acts as a negative regulator of PARN, thereby acting as an inhibitor of mRNA deadenylation. In the CBC complex, NCBP2/CBP20 recognizes and binds capped RNAs (m7GpppG-capped RNA) but requires NCBP1/CBP80 to stabilize the movement of its N-terminal loop and lock the CBC into a high affinity cap-binding state with the cap structure. The conventional cap-binding complex with NCBP2 binds both small nuclear RNA (snRNA) and messenger (mRNA) and is involved in their export from the nucleus. The protein is Nuclear cap-binding protein subunit 2 (NCBP2) of Gallus gallus (Chicken).